A 450-amino-acid chain; its full sequence is tRNA modification GTPase MnmE (450 aa).

Residues Arg23, Glu80, and Arg123 each contribute to the (6S)-5-formyl-5,6,7,8-tetrahydrofolate site. The TrmE-type G domain occupies 219–372; sequence GLHVVLAGKP…LRQRLLQLAG (154 aa). K(+) is bound at residue Asn229. Residues 229–234, 248–254, 273–276, and 353–355 each bind GTP; these read NVGKSS, TPIAGTT, DTAG, and SAR. Residue Ser233 participates in Mg(2+) binding. Positions 248, 250, and 253 each coordinate K(+). Thr254 serves as a coordination point for Mg(2+). Residue Lys450 coordinates (6S)-5-formyl-5,6,7,8-tetrahydrofolate.

The protein belongs to the TRAFAC class TrmE-Era-EngA-EngB-Septin-like GTPase superfamily. TrmE GTPase family. Homodimer. Heterotetramer of two MnmE and two MnmG subunits. The cofactor is K(+).

Its subcellular location is the cytoplasm. Functionally, exhibits a very high intrinsic GTPase hydrolysis rate. Involved in the addition of a carboxymethylaminomethyl (cmnm) group at the wobble position (U34) of certain tRNAs, forming tRNA-cmnm(5)s(2)U34. The polypeptide is tRNA modification GTPase MnmE (Bordetella parapertussis (strain 12822 / ATCC BAA-587 / NCTC 13253)).